Reading from the N-terminus, the 289-residue chain is Beta-lactamase Toho-2 (289 aa).

Residues 1–28 form the signal peptide; that stretch reads MVTKRVQRMMSAAAACIPLLLGSPTLYA. Ser73 (acyl-ester intermediate) is an active-site residue. Substrate is bound at residue 235 to 237; it reads KTG.

The protein belongs to the class-A beta-lactamase family.

It carries out the reaction a beta-lactam + H2O = a substituted beta-amino acid. Inhibited 16-fold better by the beta-lactamase inhibitor tazobactam than by clavulanic acid. Functionally, hydrolyzes beta-lactam antibiotics such as penicillin G, carbenicillin, cephaloridine, cefoxitin, cefotaxime, ceftazidime, and aztreonam. Has especially increased relative hydrolysis rates for cephalothin, cephaloridine, cefotaxime and ceftizoxime. The chain is Beta-lactamase Toho-2 (bla) from Escherichia coli.